A 514-amino-acid chain; its full sequence is 1,25-dihydroxyvitamin D(3) 24-hydroxylase, mitochondrial (514 aa).

The transit peptide at 1–35 (MSCPIDKRRPLIAFLRRLRDLGQPPRSVTSKAHVK) directs the protein to the mitochondrion. Residue C462 coordinates heme.

The protein belongs to the cytochrome P450 family. Heme is required as a cofactor.

The protein localises to the mitochondrion. It catalyses the reaction calcitriol + 2 reduced [adrenodoxin] + O2 + 2 H(+) = calcitetrol + 2 oxidized [adrenodoxin] + H2O. The enzyme catalyses calcitetrol + 2 reduced [adrenodoxin] + O2 + 2 H(+) = (1S)-1,25-dihydroxy-24-oxocalciol + 2 oxidized [adrenodoxin] + 2 H2O. The catalysed reaction is (1S)-1,25-dihydroxy-24-oxocalciol + 2 reduced [adrenodoxin] + O2 + 2 H(+) = (1S)-1,23,25-trihydroxy-24-oxocalciol + 2 oxidized [adrenodoxin] + H2O. It carries out the reaction (1S)-1,23-dihydroxy-24,25,26,27-tetranorcalciol + 2 reduced [adrenodoxin] + O2 + 2 H(+) = (1S)-1-hydroxy-23-oxo-24,25,26,27-tetranorcalciol + 2 oxidized [adrenodoxin] + 2 H2O. It catalyses the reaction (1S)-1-hydroxy-23-oxo-24,25,26,27-tetranorcalciol + 2 reduced [adrenodoxin] + O2 + H(+) = calcitroate + 2 oxidized [adrenodoxin] + H2O. The enzyme catalyses calcidiol + 2 reduced [adrenodoxin] + O2 + 2 H(+) = secalciferol + 2 oxidized [adrenodoxin] + H2O. The catalysed reaction is secalciferol + 2 reduced [adrenodoxin] + O2 + 2 H(+) = 25-hydroxy-24-oxocalciol + 2 oxidized [adrenodoxin] + 2 H2O. It carries out the reaction 25-hydroxy-24-oxocalciol + 2 reduced [adrenodoxin] + O2 + 2 H(+) = 23S,25-dihydroxy-24-oxocholecalciferol + 2 oxidized [adrenodoxin] + H2O. It catalyses the reaction 20S,23-dihydroxycholecalciferol + 2 reduced [adrenodoxin] + O2 + 2 H(+) = 20S,23,25-trihydroxycholecalciferol + 2 oxidized [adrenodoxin] + H2O. The enzyme catalyses 20S,23-dihydroxycholecalciferol + 2 reduced [adrenodoxin] + O2 + 2 H(+) = 20S,23,24-trihydroxycholecalciferol + 2 oxidized [adrenodoxin] + H2O. The catalysed reaction is 20S-hydroxycholecalciferol + 2 reduced [adrenodoxin] + O2 + 2 H(+) = 20S,25-dihydroxycholecalciferol + 2 oxidized [adrenodoxin] + H2O. It carries out the reaction 20S-hydroxycholecalciferol + 2 reduced [adrenodoxin] + O2 + 2 H(+) = 20S,24S-dihydroxycholecalciferol + 2 oxidized [adrenodoxin] + H2O. It catalyses the reaction 20S-hydroxycholecalciferol + 2 reduced [adrenodoxin] + O2 + 2 H(+) = 20S,24R-dihydroxycholecalciferol + 2 oxidized [adrenodoxin] + H2O. Functionally, a cytochrome P450 monooxygenase with a key role in vitamin D catabolism and calcium homeostasis. Via C24-oxidation pathway, catalyzes the inactivation of both the vitamin D precursor calcidiol (25-hydroxyvitamin D(3)) and the active hormone calcitriol (1-alpha,25-dihydroxyvitamin D(3)). With initial hydroxylation at C-24 (via C24-oxidation pathway), performs a sequential 6-step oxidation of calcitriol leading to the formation of the biliary metabolite calcitroic acid. Hydroxylates at C-24 or C-25 other vitamin D active metabolites, such as CYP11A1-derived secosteroids 20S-hydroxycholecalciferol and 20S,23-dihydroxycholecalciferol. Mechanistically, uses molecular oxygen inserting one oxygen atom into a substrate, and reducing the second into a water molecule, with two electrons provided by NADPH via FDXR/adrenodoxin reductase and FDX1/adrenodoxin. The polypeptide is 1,25-dihydroxyvitamin D(3) 24-hydroxylase, mitochondrial (Mus musculus (Mouse)).